We begin with the raw amino-acid sequence, 152 residues long: Ribosome maturation factor RimP (152 aa).

The protein belongs to the RimP family.

Its subcellular location is the cytoplasm. Its function is as follows. Required for maturation of 30S ribosomal subunits. The polypeptide is Ribosome maturation factor RimP (Salmonella arizonae (strain ATCC BAA-731 / CDC346-86 / RSK2980)).